We begin with the raw amino-acid sequence, 337 residues long: Ferredoxin--NADP reductase (337 aa).

Residues Asp35, Gln43, Tyr48, Ala88, Phe122, Asp289, and Thr330 each contribute to the FAD site.

It belongs to the ferredoxin--NADP reductase type 2 family. As to quaternary structure, homodimer. FAD serves as cofactor.

The catalysed reaction is 2 reduced [2Fe-2S]-[ferredoxin] + NADP(+) + H(+) = 2 oxidized [2Fe-2S]-[ferredoxin] + NADPH. This Ehrlichia ruminantium (strain Welgevonden) protein is Ferredoxin--NADP reductase.